Consider the following 185-residue polypeptide: Putative manganese efflux pump MntP (185 aa).

6 helical membrane-spanning segments follow: residues 4 to 24 (LTSS…ALAI), 36 to 56 (ALVI…AGWI), 65 to 85 (ISSY…IKMI), 105 to 125 (VILL…SFGV), 130 to 150 (VLMP…AGVF), and 165 to 185 (IFGG…ILPL).

It belongs to the MntP (TC 9.B.29) family.

It localises to the cell membrane. In terms of biological role, probably functions as a manganese efflux pump. The chain is Putative manganese efflux pump MntP from Methanoregula boonei (strain DSM 21154 / JCM 14090 / 6A8).